We begin with the raw amino-acid sequence, 86 residues long: MSKGHSLQDPYLNTLRKERVPVSIYLVNGIKLQGQIESFDQFVILLKNTVSQMVYKHAISTVVPSRPVRLPSAGDSEQADAEPGNA.

Residues 9-68 (DPYLNTLRKERVPVSIYLVNGIKLQGQIESFDQFVILLKNTVSQMVYKHAISTVVPSRPV) enclose the Sm domain. The segment at 66-86 (RPVRLPSAGDSEQADAEPGNA) is disordered.

The protein belongs to the Hfq family. In terms of assembly, homohexamer.

Functionally, RNA chaperone that binds small regulatory RNA (sRNAs) and mRNAs to facilitate mRNA translational regulation in response to envelope stress, environmental stress and changes in metabolite concentrations. Also binds with high specificity to tRNAs. The sequence is that of RNA-binding protein Hfq from Ectopseudomonas mendocina (strain ymp) (Pseudomonas mendocina).